A 1169-amino-acid chain; its full sequence is Chromosome partition protein Smc (1169 aa).

Position 32–39 (32–39 (PNGCGKSN)) interacts with ATP. 2 coiled-coil regions span residues 170–507 (ISKY…ALGE) and 659–1030 (REQQ…FQSL).

It belongs to the SMC family. Homodimer.

It is found in the cytoplasm. In terms of biological role, required for chromosome condensation and partitioning. This chain is Chromosome partition protein Smc, found in Coxiella burnetii (strain RSA 493 / Nine Mile phase I).